The primary structure comprises 514 residues: Probable peptidoglycan glycosyltransferase FtsW (514 aa).

9 consecutive transmembrane segments (helical) span residues 45–65, 86–106, 108–128, 137–157, 182–202, 218–238, 301–321, 347–367, and 373–393; these read IGLI…VTSA, IYIV…MQFW, TANP…LLVG, WLAL…FFFT, VVFF…TVVV, LWQF…LIVF, ILAE…ILWM, VGIW…GILP, and LPLV…VALL. Disordered stretches follow at residues 411 to 437 and 449 to 501; these read GDNK…RTKH and DYNQ…AGIK.

It belongs to the SEDS family. FtsW subfamily.

The protein localises to the cell inner membrane. It carries out the reaction [GlcNAc-(1-&gt;4)-Mur2Ac(oyl-L-Ala-gamma-D-Glu-L-Lys-D-Ala-D-Ala)](n)-di-trans,octa-cis-undecaprenyl diphosphate + beta-D-GlcNAc-(1-&gt;4)-Mur2Ac(oyl-L-Ala-gamma-D-Glu-L-Lys-D-Ala-D-Ala)-di-trans,octa-cis-undecaprenyl diphosphate = [GlcNAc-(1-&gt;4)-Mur2Ac(oyl-L-Ala-gamma-D-Glu-L-Lys-D-Ala-D-Ala)](n+1)-di-trans,octa-cis-undecaprenyl diphosphate + di-trans,octa-cis-undecaprenyl diphosphate + H(+). It functions in the pathway cell wall biogenesis; peptidoglycan biosynthesis. Its function is as follows. Peptidoglycan polymerase that is essential for cell division. The sequence is that of Probable peptidoglycan glycosyltransferase FtsW from Alteromonas naphthalenivorans.